The following is a 484-amino-acid chain: Catalase (484 aa).

Methionine 53 carries the post-translational modification Methionine sulfone. Active-site residues include histidine 54 and asparagine 127. Heme is bound at residue tyrosine 337.

As to quaternary structure, homotetramer. The cofactor is heme. It depends on NADP(+) as a cofactor.

The protein localises to the cytoplasm. The catalysed reaction is 2 H2O2 = O2 + 2 H2O. Its function is as follows. Decomposes hydrogen peroxide into water and oxygen; serves to protect cells from the toxic effects of hydrogen peroxide. The polypeptide is Catalase (katA) (Proteus mirabilis).